Consider the following 360-residue polypeptide: MPKKILFTGGGTVGHVTLNLILIPKFIKDGWEVHYIGDKNGIEHIEIEKSGLDVTFHAIATGKLRRYFSWQNLADVFKVALGLLQSLFIVAKLRPQALFSKGGFVSVPPVVAAKLLGKPVFIHESDRSMGLANKIAYKFATTMYTTFEQEDQLSKVKHLGAVTKVFKDANQMPESTQLEAVKEYFSRDLKTLLFIGGSAGAHVFNQFISDHPELKQRYNIINITGDPHLNELSSHLYRVDYVTDLYQPLIAMADLVVTRGGSNTLFELLAMAKLHLIVPLGKEASRGDQLENATYFEKRGYAKQLQEPDLTLHNFDQAMADLFEHQADYEATMLATKEIQSPDFFYDLLRADISSAIKEK.

Positions 198 and 289 each coordinate UDP-N-acetyl-alpha-D-glucosamine.

It belongs to the glycosyltransferase 28 family. MurG subfamily.

The protein localises to the cell membrane. The catalysed reaction is Mur2Ac(oyl-L-Ala-gamma-D-Glu-L-Lys-D-Ala-D-Ala)-di-trans,octa-cis-undecaprenyl diphosphate + UDP-N-acetyl-alpha-D-glucosamine = beta-D-GlcNAc-(1-&gt;4)-Mur2Ac(oyl-L-Ala-gamma-D-Glu-L-Lys-D-Ala-D-Ala)-di-trans,octa-cis-undecaprenyl diphosphate + UDP + H(+). Its pathway is cell wall biogenesis; peptidoglycan biosynthesis. In terms of biological role, cell wall formation. Catalyzes the transfer of a GlcNAc subunit on undecaprenyl-pyrophosphoryl-MurNAc-pentapeptide (lipid intermediate I) to form undecaprenyl-pyrophosphoryl-MurNAc-(pentapeptide)GlcNAc (lipid intermediate II). In Streptococcus pyogenes serotype M3 (strain SSI-1), this protein is UDP-N-acetylglucosamine--N-acetylmuramyl-(pentapeptide) pyrophosphoryl-undecaprenol N-acetylglucosamine transferase.